A 239-amino-acid chain; its full sequence is Probable transcriptional regulatory protein EF_2866 (239 aa).

Belongs to the TACO1 family. YeeN subfamily.

It localises to the cytoplasm. The protein is Probable transcriptional regulatory protein EF_2866 of Enterococcus faecalis (strain ATCC 700802 / V583).